A 338-amino-acid chain; its full sequence is Lumican (338 aa).

A signal peptide spans 1–18 (MSLSAFTLFLALIGGTSG). Pyrrolidone carboxylic acid is present on Gln-19. Tyr-20, Tyr-21, Tyr-23, and Tyr-30 each carry sulfotyrosine. The LRRNT domain maps to 28 to 66 (SIYGQSSPNCAPECNCPESYPSAMYCDELKLKSVPMVPP). LRR repeat units lie at residues 67–88 (GIKY…AFEN), 91–114 (DLQW…VFSK), 117–137 (QLKK…PLPK), 138–159 (SLED…EGLV), 160–181 (NLTF…AAFK), 185–205 (SLEY…GLPV), 206–227 (SLLT…YFKR), 230–253 (ALQY…SFNV), 255–276 (SLVE…NENL), and 277–296 (ENYY…SFCK). Asn-88 carries an N-linked (GlcNAc...) (keratan sulfate) asparagine glycan. An N-linked (GlcNAc...) (keratan sulfate) asparagine glycan is attached at Asn-127. Asn-160 carries an N-linked (GlcNAc...) (keratan sulfate) asparagine glycan. Asn-252 is a glycosylation site (N-linked (GlcNAc...) (keratan sulfate) asparagine). Cys-295 and Cys-328 are joined by a disulfide. Residue Ser-304 is modified to Phosphoserine. Residues 305–326 (KIKHLRLDGNRISETSLPPDMY) form an LRR 11 repeat.

It belongs to the small leucine-rich proteoglycan (SLRP) family. SLRP class II subfamily. As to quaternary structure, binds to laminin. In terms of processing, sulfated on tyrosine residue(s). Contains keratan sulfate. Cornea and other tissues.

It localises to the secreted. The protein resides in the extracellular space. Its subcellular location is the extracellular matrix. This chain is Lumican (LUM), found in Homo sapiens (Human).